A 495-amino-acid chain; its full sequence is Sialin (495 aa).

A disordered region spans residues 1–24 (MKSPVSDLAPSDGEEGSDRTPLLQ). At S3 the chain carries Phosphoserine. Positions 22–23 (LL) match the Dileucine internalization motif motif. A helical transmembrane segment spans residues 42 to 62 (LAFLSFFGFFVLYSLRVNLSV). 3 N-linked (GlcNAc...) asparagine glycosylation sites follow: N71, N77, and N95. A run of 11 helical transmembrane segments spans residues 110-130 (WILGSFFYGYIITQIPGGYVA), 137-157 (LLLGFGIFATAIFTLFTPLAA), 159-179 (FGVGALVALRALEGLGEGVTY), 201-221 (ISYAGAQLGTVVSLPLSGVIC), 228-248 (YVFYFFGIVGIIWFILWICLV), 289-309 (LPLWAIVVAHFSYNWTFYTLL), 329-349 (FLSAVPYLGCWLCMILSGQAA), 366-386 (VFSLIGMIGPAIFLVAAGFIG), 392-412 (AVAFLTISTTLGGFCSSGFSI), 424-444 (ILLGITNTFATIPGMIGPIIA), and 458-478 (TVFCIAAAINVFGAIFFTLFA).

The protein belongs to the major facilitator superfamily. Sodium/anion cotransporter family. Significantly expressed in lung endothelial cells, and much less in liver.

The protein localises to the basolateral cell membrane. It is found in the cytoplasmic vesicle. The protein resides in the secretory vesicle. Its subcellular location is the synaptic vesicle membrane. It localises to the lysosome membrane. It carries out the reaction N-acetylneuraminate(in) + H(+)(in) = N-acetylneuraminate(out) + H(+)(out). It catalyses the reaction D-glucuronate(out) + H(+)(out) = D-glucuronate(in) + H(+)(in). The catalysed reaction is 2 nitrate(out) + H(+)(out) = 2 nitrate(in) + H(+)(in). The enzyme catalyses L-aspartate(out) = L-aspartate(in). It carries out the reaction L-glutamate(out) = L-glutamate(in). It catalyses the reaction N-acetyl-L-aspartyl-L-glutamate(out) = N-acetyl-L-aspartyl-L-glutamate(in). Functionally, multifunctional anion transporter that operates via two distinct transport mechanisms, namely proton-coupled anion cotransport and membrane potential-dependent anion transport. Electroneutral proton-coupled acidic monosaccharide symporter, with a sugar to proton stoichiometry of 1:1. Exports glucuronic acid and free sialic acid derived from sialoglycoconjugate degradation out of lysosomes, driven by outwardly directed lysosomal pH gradient. May regulate lysosome function and metabolism of sialylated conjugates that impact oligodendrocyte lineage differentiation and myelinogenesis in the central nervous system. Electrogenic proton-coupled nitrate symporter that transports nitrate ions across the basolateral membrane of salivary gland acinar cells, with nitrate to proton stoichiometry of 2:1. May contribute to nitrate clearance from serum by salivary glands, where it is further concentrated and secreted in the saliva. Uses membrane potential to drive the uptake of acidic amino acids and peptides into synaptic vesicles. Responsible for synaptic vesicular storage of L-aspartate and L-glutamate in pinealocytes as well as vesicular uptake of N-acetyl-L-aspartyl-L-glutamate neuropeptide, relevant to aspartegic-associated glutamatergic neurotransmission and activation of metabotropic receptors that inhibit subsequent transmitter release. Receptor for CM101, a polysaccharide produced by group B Streptococcus with antipathoangiogenic properties. This Ovis aries (Sheep) protein is Sialin (SLC17A5).